We begin with the raw amino-acid sequence, 120 residues long: U-scoloptoxin(20)-Cw1a (120 aa).

The signal sequence occupies residues 1–26 (MNSTDRLLGVLLAVVALILLIRISEA). The tract at residues 87 to 106 (SSGKSLTTTKDSSESRKKEI) is disordered. The span at 97–106 (DSSESRKKEI) shows a compositional bias: basic and acidic residues.

Belongs to the scoloptoxin-20 family. Post-translationally, contains 3 disulfide bonds. Expressed by the venom gland.

Its subcellular location is the secreted. The polypeptide is U-scoloptoxin(20)-Cw1a (Cormocephalus westwoodi (Westwood's green centipede)).